Here is an 84-residue protein sequence, read N- to C-terminus: Exodeoxyribonuclease 7 small subunit (84 aa).

The disordered stretch occupies residues 65-84 (QEGDWTTSPFEPASGEPPGG).

It belongs to the XseB family. As to quaternary structure, heterooligomer composed of large and small subunits.

Its subcellular location is the cytoplasm. It carries out the reaction Exonucleolytic cleavage in either 5'- to 3'- or 3'- to 5'-direction to yield nucleoside 5'-phosphates.. In terms of biological role, bidirectionally degrades single-stranded DNA into large acid-insoluble oligonucleotides, which are then degraded further into small acid-soluble oligonucleotides. This Syntrophobacter fumaroxidans (strain DSM 10017 / MPOB) protein is Exodeoxyribonuclease 7 small subunit.